Reading from the N-terminus, the 202-residue chain is Na(+)-translocating NADH-quinone reductase subunit E (202 aa).

The next 6 membrane-spanning stretches (helical) occupy residues 11–31 (AIFV…FLAI), 35–55 (IEAA…TVPV), 81–101 (FLGL…MEMV), 114–134 (GVFL…LFMV), 144–164 (LVYG…LAGI), and 180–200 (LGIT…FSGI).

The protein belongs to the NqrDE/RnfAE family. As to quaternary structure, composed of six subunits; NqrA, NqrB, NqrC, NqrD, NqrE and NqrF.

Its subcellular location is the cell inner membrane. It carries out the reaction a ubiquinone + n Na(+)(in) + NADH + H(+) = a ubiquinol + n Na(+)(out) + NAD(+). In terms of biological role, NQR complex catalyzes the reduction of ubiquinone-1 to ubiquinol by two successive reactions, coupled with the transport of Na(+) ions from the cytoplasm to the periplasm. NqrA to NqrE are probably involved in the second step, the conversion of ubisemiquinone to ubiquinol. This Marinobacter nauticus (strain ATCC 700491 / DSM 11845 / VT8) (Marinobacter aquaeolei) protein is Na(+)-translocating NADH-quinone reductase subunit E.